We begin with the raw amino-acid sequence, 233 residues long: Hydroxyacylglutathione hydrolase (233 aa).

Residues His52, His54, Asp56, His57, His108, Asp125, and His163 each contribute to the Zn(2+) site.

The protein belongs to the metallo-beta-lactamase superfamily. Glyoxalase II family. As to quaternary structure, monomer. It depends on Zn(2+) as a cofactor.

The enzyme catalyses an S-(2-hydroxyacyl)glutathione + H2O = a 2-hydroxy carboxylate + glutathione + H(+). The protein operates within secondary metabolite metabolism; methylglyoxal degradation; (R)-lactate from methylglyoxal: step 2/2. Its function is as follows. Thiolesterase that catalyzes the hydrolysis of S-D-lactoyl-glutathione to form glutathione and D-lactic acid. This chain is Hydroxyacylglutathione hydrolase, found in Actinobacillus succinogenes (strain ATCC 55618 / DSM 22257 / CCUG 43843 / 130Z).